The primary structure comprises 54 residues: Large ribosomal subunit protein bL33B (54 aa).

The protein belongs to the bacterial ribosomal protein bL33 family.

In Mycobacterium sp. (strain KMS), this protein is Large ribosomal subunit protein bL33B.